Reading from the N-terminus, the 622-residue chain is Pentatricopeptide repeat-containing protein At5g06540 (622 aa).

10 PPR repeats span residues 81-115 (NLFV…RIWP), 116-150 (DNIT…GFQN), 151-181 (DVYV…MGFR), 182-212 (DVVS…MPHR), 213-247 (NLFT…GVVA), 248-282 (NETV…HMTV), 283-313 (NLIL…LPET), 314-348 (DSLS…GFIP), 349-384 (RDVT…GIEP), and 385-419 (RLEH…PNAP). Residues 420–495 (ILGALLGACK…PPGWSLIEID (76 aa)) are type E motif. Residues 496–527 (GKINKFTMGDDQKHPEMGKIRRKWEEILGKIR) are type E(+) motif. The interval 528–622 (LIGYKGNTGD…NGVCSCRDYW (95 aa)) is type DYW motif.

The protein belongs to the PPR family. PCMP-H subfamily.

In Arabidopsis thaliana (Mouse-ear cress), this protein is Pentatricopeptide repeat-containing protein At5g06540 (PCMP-H88).